Consider the following 216-residue polypeptide: Sugar fermentation stimulation protein homolog (216 aa).

It belongs to the SfsA family.

In Thermoplasma volcanium (strain ATCC 51530 / DSM 4299 / JCM 9571 / NBRC 15438 / GSS1), this protein is Sugar fermentation stimulation protein homolog.